The following is a 381-amino-acid chain: MKEAVVIWAKRTPFGKYGGALRHLEPEALLLPLFQNLKQTFPEVMDQVDDVVLGNVVGNGGNVARKSLLEAGLNHRIPGITLDRQCGSGLESIIYACRMVQCEAGKVFIAGGVESTSRAPWKIKRPQSVYEMQLPQFFERASFAPEGQDPSMIEAAENVAQHYNISRNDQDLFAARSHRLVATHFNNGDINREIVPLTIKGALFDRDESLKPNLTEARLHRLRPILPNGTVTVGNSCMKNDGAGIALIMEKEMAVAMGIKWGMLYRDAVTTGVDPTLLGIGPVPAVSQLLKRQKLNIEDISAIELNEAFSSQVLASINELHLGLDKVNQWGGAIATGHPYSASGAALVARLLNLPNWQYGIATMGIGGGMGNAVLFEKWRQ.

The active-site Acyl-thioester intermediate is the cysteine 86. Histidine 338 acts as the Proton acceptor in catalysis.

It belongs to the thiolase-like superfamily. Thiolase family.

The polypeptide is Putative acetyl-CoA C-acetyltransferase VraB (vraB) (Staphylococcus haemolyticus (strain JCSC1435)).